A 484-amino-acid chain; its full sequence is Protein nucleotidyltransferase YdiU (484 aa).

Residues Gly-81, Gly-83, Arg-84, Lys-103, Asp-115, Gly-116, Arg-166, and Arg-173 each coordinate ATP. Asp-244 acts as the Proton acceptor in catalysis. The Mg(2+) site is built by Asn-245 and Asp-254. Asp-254 contacts ATP.

The protein belongs to the SELO family. It depends on Mg(2+) as a cofactor. Requires Mn(2+) as cofactor.

The enzyme catalyses L-seryl-[protein] + ATP = 3-O-(5'-adenylyl)-L-seryl-[protein] + diphosphate. The catalysed reaction is L-threonyl-[protein] + ATP = 3-O-(5'-adenylyl)-L-threonyl-[protein] + diphosphate. It catalyses the reaction L-tyrosyl-[protein] + ATP = O-(5'-adenylyl)-L-tyrosyl-[protein] + diphosphate. It carries out the reaction L-histidyl-[protein] + UTP = N(tele)-(5'-uridylyl)-L-histidyl-[protein] + diphosphate. The enzyme catalyses L-seryl-[protein] + UTP = O-(5'-uridylyl)-L-seryl-[protein] + diphosphate. The catalysed reaction is L-tyrosyl-[protein] + UTP = O-(5'-uridylyl)-L-tyrosyl-[protein] + diphosphate. In terms of biological role, nucleotidyltransferase involved in the post-translational modification of proteins. It can catalyze the addition of adenosine monophosphate (AMP) or uridine monophosphate (UMP) to a protein, resulting in modifications known as AMPylation and UMPylation. This chain is Protein nucleotidyltransferase YdiU, found in Shewanella putrefaciens (strain CN-32 / ATCC BAA-453).